The sequence spans 297 residues: 4-hydroxy-tetrahydrodipicolinate synthase (297 aa).

T50 contacts pyruvate. Y138 acts as the Proton donor/acceptor in catalysis. Catalysis depends on K166, which acts as the Schiff-base intermediate with substrate. I208 contacts pyruvate.

It belongs to the DapA family. Homotetramer; dimer of dimers.

The protein resides in the cytoplasm. It carries out the reaction L-aspartate 4-semialdehyde + pyruvate = (2S,4S)-4-hydroxy-2,3,4,5-tetrahydrodipicolinate + H2O + H(+). It participates in amino-acid biosynthesis; L-lysine biosynthesis via DAP pathway; (S)-tetrahydrodipicolinate from L-aspartate: step 3/4. In terms of biological role, catalyzes the condensation of (S)-aspartate-beta-semialdehyde [(S)-ASA] and pyruvate to 4-hydroxy-tetrahydrodipicolinate (HTPA). This chain is 4-hydroxy-tetrahydrodipicolinate synthase, found in Desulfotalea psychrophila (strain LSv54 / DSM 12343).